The sequence spans 176 residues: Thiol:disulfide interchange protein HelX (176 aa).

The signal sequence occupies residues M1 to A19. Residues A35–A172 enclose the Thioredoxin domain. Cysteines 75 and 78 form a disulfide.

It belongs to the thioredoxin family. DsbE subfamily.

The protein resides in the periplasm. In terms of biological role, required for disulfide bond formation in some periplasmic proteins. Also acts as a disulfide oxidoreductase in cytochromes c biogenesis. The cysteines of apocytochromes c must be in the reduced state for covalent linkage between the two moieties to occur. The protein is Thiol:disulfide interchange protein HelX (helX) of Rhodobacter capsulatus (strain ATCC BAA-309 / NBRC 16581 / SB1003).